Here is a 96-residue protein sequence, read N- to C-terminus: NADH-quinone oxidoreductase subunit K (96 aa).

Helical transmembrane passes span 1–21, 25–45, and 56–76; these read MNYI…VLVR, IIVF…FVAF, and VIAF…LAII.

This sequence belongs to the complex I subunit 4L family. NDH-1 is composed of 14 different subunits. Subunits NuoA, H, J, K, L, M, N constitute the membrane sector of the complex.

The protein localises to the cell membrane. The enzyme catalyses a quinone + NADH + 5 H(+)(in) = a quinol + NAD(+) + 4 H(+)(out). Its function is as follows. NDH-1 shuttles electrons from NADH, via FMN and iron-sulfur (Fe-S) centers, to quinones in the respiratory chain. The immediate electron acceptor for the enzyme in this species is believed to be a menaquinone. Couples the redox reaction to proton translocation (for every two electrons transferred, four hydrogen ions are translocated across the cytoplasmic membrane), and thus conserves the redox energy in a proton gradient. The chain is NADH-quinone oxidoreductase subunit K from Thermobifida fusca (strain YX).